Reading from the N-terminus, the 396-residue chain is Subtelomeric hrmA-associated cluster protein AFUB_079040 (396 aa).

2 disordered regions span residues 1-32 and 347-396; these read MANK…QQSL and YPEN…ECGR. Residues 23–32 show a composition bias toward polar residues; the sequence is SHASGSQQSL. Residues 367–380 show a composition bias toward basic residues; it reads SKKKKDKKKKKSNK.

In terms of biological role, part of the subtelomeric hrmA-associated cluster (HAC) containing genes that alter the hyphal surface (such as reduced total chitin or increased beta-glucan exposure) and perturb inter-hyphal interactions within the developing biofilms, resulting in a loss of vertically aligned polarized growing filaments. Consequently, this hypoxia-typic morphotype (called H-MORPH) with altered biofilm architecture leads to increased hypoxia fitness, increased host inflammation, rapid disease progression, and mortality in a murine model of invasive aspergillosis. This chain is Subtelomeric hrmA-associated cluster protein AFUB_079040, found in Aspergillus fumigatus (strain CBS 144.89 / FGSC A1163 / CEA10) (Neosartorya fumigata).